The chain runs to 232 residues: Thiamine import ATP-binding protein ThiQ (232 aa).

Residues 2–230 (LKLTDITWLY…KASASAILGI (229 aa)) form the ABC transporter domain. 32–39 (GPSGAGKS) lines the ATP pocket.

This sequence belongs to the ABC transporter superfamily. Thiamine importer (TC 3.A.1.19.1) family. The complex is composed of two ATP-binding proteins (ThiQ), two transmembrane proteins (ThiP) and a solute-binding protein (ThiB).

The protein localises to the cell inner membrane. It catalyses the reaction thiamine(out) + ATP + H2O = thiamine(in) + ADP + phosphate + H(+). In terms of biological role, part of the ABC transporter complex ThiBPQ involved in thiamine import. Responsible for energy coupling to the transport system. This is Thiamine import ATP-binding protein ThiQ from Shigella boydii serotype 4 (strain Sb227).